The following is a 131-amino-acid chain: mRNA stability protein IGO2 (131 aa).

Residues 1 to 13 are compositionally biased toward polar residues; it reads MSEDLSPTSSRVD. Residues 1–26 are disordered; that stretch reads MSEDLSPTSSRVDLSNPHGFTKEGVD. S2 bears the N-acetylserine mark. A phosphoserine mark is found at S6, S63, S108, and S119. The disordered stretch occupies residues 81–131; sequence VNNSSNNLPVTNPSGLRESIIRRRMSSSSGGDSISRQGSISSGPPPRSPNK. Low complexity predominate over residues 106 to 122; that stretch reads SSSSGGDSISRQGSISS.

It belongs to the endosulfine family. In terms of processing, phosphorylated by RIM15.

The protein localises to the cytoplasm. The protein resides in the nucleus. Functionally, required for TORC1 to properly control gene expression and chronological life span. Plays an essential role in initiation of the G0 program by preventing the degradation of specific nutrient-regulated mRNAs via the 5'-3' mRNA decay pathway. The polypeptide is mRNA stability protein IGO2 (IGO2) (Saccharomyces cerevisiae (strain ATCC 204508 / S288c) (Baker's yeast)).